The primary structure comprises 468 residues: Hydroxymethylglutaryl-CoA synthase B (468 aa).

The Proton donor/acceptor role is filled by Glu85. Residue Cys119 is the Acyl-thioester intermediate of the active site. Residues Cys119, Thr161, Ser211, His250, Lys259, Asn327, and Ser359 each contribute to the (3S)-3-hydroxy-3-methylglutaryl-CoA site. The active-site Proton donor/acceptor is the His250.

This sequence belongs to the thiolase-like superfamily. HMG-CoA synthase family.

The enzyme catalyses acetoacetyl-CoA + acetyl-CoA + H2O = (3S)-3-hydroxy-3-methylglutaryl-CoA + CoA + H(+). It participates in metabolic intermediate biosynthesis; (R)-mevalonate biosynthesis; (R)-mevalonate from acetyl-CoA: step 2/3. Its function is as follows. Condenses acetyl-CoA with acetoacetyl-CoA to form HMG-CoA, which is the substrate for HMG-CoA reductase. In Dictyostelium discoideum (Social amoeba), this protein is Hydroxymethylglutaryl-CoA synthase B (hgsB).